A 571-amino-acid polypeptide reads, in one-letter code: Proline--tRNA ligase (571 aa).

It belongs to the class-II aminoacyl-tRNA synthetase family. ProS type 1 subfamily. In terms of assembly, homodimer.

It is found in the cytoplasm. The enzyme catalyses tRNA(Pro) + L-proline + ATP = L-prolyl-tRNA(Pro) + AMP + diphosphate. Its function is as follows. Catalyzes the attachment of proline to tRNA(Pro) in a two-step reaction: proline is first activated by ATP to form Pro-AMP and then transferred to the acceptor end of tRNA(Pro). As ProRS can inadvertently accommodate and process non-cognate amino acids such as alanine and cysteine, to avoid such errors it has two additional distinct editing activities against alanine. One activity is designated as 'pretransfer' editing and involves the tRNA(Pro)-independent hydrolysis of activated Ala-AMP. The other activity is designated 'posttransfer' editing and involves deacylation of mischarged Ala-tRNA(Pro). The misacylated Cys-tRNA(Pro) is not edited by ProRS. This chain is Proline--tRNA ligase, found in Histophilus somni (strain 129Pt) (Haemophilus somnus).